An 885-amino-acid polypeptide reads, in one-letter code: Chitobiase (885 aa).

A signal peptide spans 1–27; sequence MNAFKLSALARLTATMGFLGGMGSAMA. 3 cysteine pairs are disulfide-bonded: Cys56-Cys66, Cys400-Cys408, and Cys505-Cys578. Glu540 acts as the Proton donor in catalysis. The interval 866–885 is disordered; the sequence is EVQVRSVSPDGKRYSRAEKV. A compositionally biased stretch (basic and acidic residues) spans 875–885; sequence DGKRYSRAEKV.

This sequence belongs to the glycosyl hydrolase 20 family. As to quaternary structure, monomer.

Its subcellular location is the periplasm. The catalysed reaction is Hydrolysis of terminal non-reducing N-acetyl-D-hexosamine residues in N-acetyl-beta-D-hexosaminides.. The protein operates within glycan degradation; chitin degradation. Its function is as follows. Digests the beta-1,4-glycosidic bonds in N-acetylglucosamine (GlcNAc) oligomers (mainly dimers). The protein is Chitobiase (chb) of Serratia marcescens.